The following is a 401-amino-acid chain: Elongation factor Tu 2 (401 aa).

Residues 10–209 (KPHVNVGTIG…AVDEYIPTPV (200 aa)) form the tr-type G domain. The segment at 19 to 26 (GHVDHGKT) is G1. 19–26 (GHVDHGKT) contributes to the GTP binding site. Residue Thr26 coordinates Mg(2+). The interval 60-64 (GITIA) is G2. A G3 region spans residues 81 to 84 (DCPG). GTP is bound by residues 81 to 85 (DCPGH) and 136 to 139 (NKVD). Residues 136–139 (NKVD) are G4. A G5 region spans residues 174–176 (SAL).

This sequence belongs to the TRAFAC class translation factor GTPase superfamily. Classic translation factor GTPase family. EF-Tu/EF-1A subfamily. As to quaternary structure, monomer.

It localises to the cytoplasm. The catalysed reaction is GTP + H2O = GDP + phosphate + H(+). Functionally, GTP hydrolase that promotes the GTP-dependent binding of aminoacyl-tRNA to the A-site of ribosomes during protein biosynthesis. The sequence is that of Elongation factor Tu 2 from Roseiflexus sp. (strain RS-1).